Reading from the N-terminus, the 98-residue chain is Hainantoxin-XVII (98 aa).

The first 40 residues, 1 to 40 (MTTVGVSLFRRSPEKITMKIATFLGLSFLLIASYVLICEA), serve as a signal peptide directing secretion. Positions 41-64 (QHPGFQELLILEENMRDPENSKER) are excised as a propeptide. Cystine bridges form between Cys66-Cys81, Cys73-Cys85, and Cys80-Cys95.

Belongs to the hainantoxin family. 17 subfamily. Expressed by the venom gland.

It localises to the secreted. Putative ion channel inhibitor. This Cyriopagopus hainanus (Chinese bird spider) protein is Hainantoxin-XVII.